The primary structure comprises 740 residues: MAAFSEMGVMPEIAQAVEEMDWLLPTDIQAESIPLILGGGDVLMAAETGSGKTGAFSIPVIQIVYETLKDQQEGKKGKTTIKTGASVLNKWQMNPYDRGSAFAIGSDGLCCQSREVKEWHGCRGTRGLLKGKHYYEVSCHDQGLCRVGWSTMQASLDLGTDKFGFGFGGTGKKSHNKQFDNYGEEFTMHDTIGCYLDIDKGHVKFSKNGKDLGLAFEIPAHIKNQALFPACVLKNAELKFNFGEEEFKFPPKDGFVALSKAPDNYIVKSQHTGNAQVSQTKFLPNAPKALIVEPSRELAEQTLNNVKQFKKYIDNPKLRELLIIGGVAARDQLSVLDNGVDIVVGTPGRLDDLVSTGKLNLSQVRFLVLDEADGLLSQGYSDFINRMHNQIPQITCDGKRLQVIVCSATLHSFDVKKLSEKIMHFPTWVDLKGEDSVPDTVHHVVVPVNPKTDKLWERLGKNHIRTDDVHAKDNTRPGANSPEMWSEAIKILKGEYAVRAIKEHKMDQAIIFCRTKIDCDNLEQYFMQQGGGPDKKGHQFSCVCLHGDRKPHERKQNLERFKKGDVRFLICTDVAARGIDIHGVPYVINVTLPDEKQNYVHRIGRVGRAERMGLAISLVATEKEKVWYHVCSNRGKGCYNTRLKEDGGCTIWYNEMQLLSEIEEHLNCTISQVEPDIKVPVDEFDGKVTYGQKRAAGGGNYKGHVDVLAPTVQELAALEKEAQTSFLHLGYLPNQLFRTF.

The interval 1-295 (MAAFSEMGVM…APKALIVEPS (295 aa)) is necessary for interaction with HNRNPK. The tract at residues 1 to 448 (MAAFSEMGVM…DTVHHVVVPV (448 aa)) is interaction with dsRNA. Residues 1–525 (MAAFSEMGVM…KIDCDNLEQY (525 aa)) form a necessary for interaction with RELA region. In terms of domain architecture, Helicase ATP-binding spans 2–428 (AAFSEMGVMP…SEKIMHFPTW (427 aa)). Residue 46-53 (AETGSGKT) participates in ATP binding. A B30.2/SPRY domain is found at 70-247 (DQQEGKKGKT…LKFNFGEEEF (178 aa)). N6-acetyllysine is present on residues lysine 239 and lysine 268. At lysine 281 the chain carries N6-acetyllysine; alternate. Residue lysine 281 forms a Glycyl lysine isopeptide (Lys-Gly) (interchain with G-Cter in SUMO2); alternate linkage. The short motif at 370–373 (DEAD) is the DEAD box element. Serine 481 is subject to Phosphoserine. Residues 493–681 (KGEYAVRAIK…QVEPDIKVPV (189 aa)) form the Helicase C-terminal domain. The segment at 525-740 (YFMQQGGGPD…YLPNQLFRTF (216 aa)) is necessary for interaction with HNRNPK.

The protein belongs to the DEAD box helicase family. DDX1 subfamily. As to quaternary structure, found in a multi-helicase-TICAM1 complex at least composed of DHX36, DDX1, DDX21 and TICAM1; this complex exists in resting cells with or without poly(I:C) RNA ligand stimulation. Interacts with DHX36. Interacts (via B30.2/SPRY domain) with DDX21 (via N-terminus); this interaction serves as bridges to TICAM1. Interacts with FAM98A (via N- and C-terminus). Interacts with MBNL1. Interacts with CSTF2. Interacts with HNRNPK. Interacts with ATM. Interacts with RELA (via C-terminus). Component of the tRNA-splicing ligase complex. Interacts with PHF5A (via C-terminus). Interacts with PQBP1. Interacts with ERCC6. In terms of processing, phosphorylated by ATM kinase; phosphorylation is increased in response to ionizing radiation (IR). As to expression, testis-specific. Expressed in the germ line stem cells, spermatogonia and spermatocytes of the testis. Also expressed in the seminoma and nonseminoma types of testicular germ cell tumors (TGCTs) (at protein level).

The protein localises to the nucleus. It is found in the cytoplasm. The protein resides in the cytosol. Its subcellular location is the cytoplasmic granule. It localises to the mitochondrion. It carries out the reaction ATP + H2O = ADP + phosphate + H(+). Its function is as follows. Acts as an ATP-dependent RNA helicase, able to unwind both RNA-RNA and RNA-DNA duplexes. Possesses 5' single-stranded RNA overhang nuclease activity. Possesses ATPase activity on various RNA, but not DNA polynucleotides. May play a role in RNA clearance at DNA double-strand breaks (DSBs), thereby facilitating the template-guided repair of transcriptionally active regions of the genome. Together with RELA, acts as a coactivator to enhance NF-kappa-B-mediated transcriptional activation. Acts as a positive transcriptional regulator of cyclin CCND2 expression. Binds to the cyclin CCND2 promoter region. Associates with chromatin at the NF-kappa-B promoter region via association with RELA. Binds to poly(A) RNA. May be involved in 3'-end cleavage and polyadenylation of pre-mRNAs. Component of the tRNA-splicing ligase complex required to facilitate the enzymatic turnover of catalytic subunit RTCB: together with archease (ZBTB8OS), acts by facilitating the guanylylation of RTCB, a key intermediate step in tRNA ligation. Component of a multi-helicase-TICAM1 complex that acts as a cytoplasmic sensor of viral double-stranded RNA (dsRNA) and plays a role in the activation of a cascade of antiviral responses including the induction of pro-inflammatory cytokines via the adapter molecule TICAM1. Specifically binds (via helicase ATP-binding domain) on both short and long poly(I:C) dsRNA. In Mus musculus (Mouse), this protein is ATP-dependent RNA helicase DDX1 (Ddx1).